The sequence spans 395 residues: 1-deoxy-D-xylulose 5-phosphate reductoisomerase (395 aa).

Thr10, Gly11, Ser12, Ile13, Arg37, Gln38, and Asn124 together coordinate NADPH. Residue Lys125 coordinates 1-deoxy-D-xylulose 5-phosphate. Glu126 is a binding site for NADPH. A Mn(2+)-binding site is contributed by Asp150. 1-deoxy-D-xylulose 5-phosphate contacts are provided by Ser151, Glu152, Ser179, and His202. Glu152 contributes to the Mn(2+) binding site. Residue Gly208 coordinates NADPH. Ser215, Asn220, Lys221, and Glu224 together coordinate 1-deoxy-D-xylulose 5-phosphate. Glu224 is a Mn(2+) binding site.

This sequence belongs to the DXR family. The cofactor is Mg(2+). Mn(2+) serves as cofactor.

It carries out the reaction 2-C-methyl-D-erythritol 4-phosphate + NADP(+) = 1-deoxy-D-xylulose 5-phosphate + NADPH + H(+). Its pathway is isoprenoid biosynthesis; isopentenyl diphosphate biosynthesis via DXP pathway; isopentenyl diphosphate from 1-deoxy-D-xylulose 5-phosphate: step 1/6. Functionally, catalyzes the NADPH-dependent rearrangement and reduction of 1-deoxy-D-xylulose-5-phosphate (DXP) to 2-C-methyl-D-erythritol 4-phosphate (MEP). The sequence is that of 1-deoxy-D-xylulose 5-phosphate reductoisomerase from Cupriavidus pinatubonensis (strain JMP 134 / LMG 1197) (Cupriavidus necator (strain JMP 134)).